Here is an 842-residue protein sequence, read N- to C-terminus: Outer membrane usher protein LpfC (842 aa).

Positions 1 to 21 (MTWTHLPLGNKTSRFTQSALA) are cleaved as a signal peptide. Cys819 and Cys841 are oxidised to a cystine.

It belongs to the fimbrial export usher family.

It is found in the cell outer membrane. Involved in the export and assembly of LpfA fimbrial subunits across the outer membrane. The protein is Outer membrane usher protein LpfC (lpfC) of Salmonella typhimurium (strain LT2 / SGSC1412 / ATCC 700720).